We begin with the raw amino-acid sequence, 299 residues long: Dermonecrotic toxin LiSicTox-alphaIVA1 (299 aa).

The first 18 residues, 1 to 18, serve as a signal peptide directing secretion; sequence MLFPTALIFGCWALVIEG. Residue H30 is part of the active site. Mg(2+)-binding residues include E50 and D52. The active-site Nucleophile is H66. Cystine bridges form between C70/C76 and C72/C217. Mg(2+) is bound at residue D110.

The protein belongs to the arthropod phospholipase D family. Class II subfamily. Class IIa sub-subfamily. Mg(2+) is required as a cofactor. As to expression, expressed by the venom gland.

The protein localises to the secreted. The catalysed reaction is an N-(acyl)-sphingosylphosphocholine = an N-(acyl)-sphingosyl-1,3-cyclic phosphate + choline. It carries out the reaction an N-(acyl)-sphingosylphosphoethanolamine = an N-(acyl)-sphingosyl-1,3-cyclic phosphate + ethanolamine. It catalyses the reaction a 1-acyl-sn-glycero-3-phosphocholine = a 1-acyl-sn-glycero-2,3-cyclic phosphate + choline. The enzyme catalyses a 1-acyl-sn-glycero-3-phosphoethanolamine = a 1-acyl-sn-glycero-2,3-cyclic phosphate + ethanolamine. In terms of biological role, dermonecrotic toxins cleave the phosphodiester linkage between the phosphate and headgroup of certain phospholipids (sphingolipid and lysolipid substrates), forming an alcohol (often choline) and a cyclic phosphate. This toxin acts on sphingomyelin (SM) with high activity. It may also act on ceramide phosphoethanolamine (CPE), lysophosphatidylcholine (LPC) and lysophosphatidylethanolamine (LPE), but not on lysophosphatidylserine (LPS), and lysophosphatidylglycerol (LPG). It acts by transphosphatidylation, releasing exclusively cyclic phosphate products as second products. Has hemolytic activity in human erythrocytes in a dose-dependent manner. In vivo, this toxin induces dermonecrosis, edema, hemorrhage, massive inflammatory response, as well as vascular permeability. In addition, thrombus formation has also been detected in dermal blood vessels. It also induces platelet aggregation. It is noteworthy that a Glu-248 replaces the Asp present in paralogs, without decrease in catalytic and hemolytic activities. This Loxosceles intermedia (Brown spider) protein is Dermonecrotic toxin LiSicTox-alphaIVA1.